Consider the following 562-residue polypeptide: Probable malate:quinone oxidoreductase (562 aa).

A disordered region spans residues 530-562 (EVPDKSATPPDPTIAPKHQHSPTHNANSEMQAL). The segment covering 551 to 562 (PTHNANSEMQAL) has biased composition (polar residues).

Belongs to the MQO family. The cofactor is FAD.

It carries out the reaction (S)-malate + a quinone = a quinol + oxaloacetate. The protein operates within carbohydrate metabolism; tricarboxylic acid cycle; oxaloacetate from (S)-malate (quinone route): step 1/1. In Xylella fastidiosa (strain 9a5c), this protein is Probable malate:quinone oxidoreductase.